The following is a 291-amino-acid chain: 4-hydroxy-tetrahydrodipicolinate synthase (291 aa).

Residue Thr44 participates in pyruvate binding. Tyr132 serves as the catalytic Proton donor/acceptor. Catalysis depends on Lys160, which acts as the Schiff-base intermediate with substrate. Ile202 is a binding site for pyruvate.

It belongs to the DapA family. Homotetramer; dimer of dimers.

It localises to the cytoplasm. It catalyses the reaction L-aspartate 4-semialdehyde + pyruvate = (2S,4S)-4-hydroxy-2,3,4,5-tetrahydrodipicolinate + H2O + H(+). The protein operates within amino-acid biosynthesis; L-lysine biosynthesis via DAP pathway; (S)-tetrahydrodipicolinate from L-aspartate: step 3/4. In terms of biological role, catalyzes the condensation of (S)-aspartate-beta-semialdehyde [(S)-ASA] and pyruvate to 4-hydroxy-tetrahydrodipicolinate (HTPA). The protein is 4-hydroxy-tetrahydrodipicolinate synthase of Zymomonas mobilis subsp. mobilis (strain ATCC 31821 / ZM4 / CP4).